Consider the following 427-residue polypeptide: Enolase (427 aa).

Gln163 contributes to the (2R)-2-phosphoglycerate binding site. Glu205 serves as the catalytic Proton donor. Residues Asp242, Glu285, and Asp312 each contribute to the Mg(2+) site. (2R)-2-phosphoglycerate contacts are provided by Lys337, Arg366, Ser367, and Lys388. Lys337 (proton acceptor) is an active-site residue.

The protein belongs to the enolase family. Requires Mg(2+) as cofactor.

It localises to the cytoplasm. The protein localises to the secreted. It is found in the cell surface. The catalysed reaction is (2R)-2-phosphoglycerate = phosphoenolpyruvate + H2O. It functions in the pathway carbohydrate degradation; glycolysis; pyruvate from D-glyceraldehyde 3-phosphate: step 4/5. Catalyzes the reversible conversion of 2-phosphoglycerate (2-PG) into phosphoenolpyruvate (PEP). It is essential for the degradation of carbohydrates via glycolysis. In Burkholderia lata (strain ATCC 17760 / DSM 23089 / LMG 22485 / NCIMB 9086 / R18194 / 383), this protein is Enolase.